The chain runs to 358 residues: Uptake hydrogenase small subunit (358 aa).

The N-terminal stretch at 1–45 (MSDIETFYDVMRRQGITRRSFMKSVRSPQHVLGLGPSFVPKIGEA) is a signal peptide. 8 residues coordinate [4Fe-4S] cluster: Cys62, Cys65, Cys160, Cys194, His232, Cys235, Cys260, and Cys266. Residues Cys275, Cys294, and Cys297 each contribute to the [3Fe-4S] cluster site.

Belongs to the [NiFe]/[NiFeSe] hydrogenase small subunit family. As to quaternary structure, heterodimer of a large and a small subunit. The cofactor is [4Fe-4S] cluster. [3Fe-4S] cluster is required as a cofactor.

The protein localises to the cell membrane. It carries out the reaction H2 + A = AH2. In terms of biological role, this enzyme recycles the H(2) produced by nitrogenase to increase the production of ATP and to protect nitrogenase against inhibition or damage by O(2) under carbon- or phosphate-limited conditions. The polypeptide is Uptake hydrogenase small subunit (hupA) (Rhodobacter capsulatus (Rhodopseudomonas capsulata)).